A 403-amino-acid polypeptide reads, in one-letter code: Cytoplasmic tRNA 2-thiolation protein 2 (403 aa).

The protein belongs to the CTU2/NCS2 family.

Its subcellular location is the cytoplasm. The protein operates within tRNA modification; 5-methoxycarbonylmethyl-2-thiouridine-tRNA biosynthesis. Functionally, plays a central role in 2-thiolation of mcm(5)S(2)U at tRNA wobble positions of tRNA(Lys), tRNA(Glu) and tRNA(Gln). May act by forming a heterodimer with NCS6/CTU1 that ligates sulfur from thiocarboxylated URM1 onto the uridine of tRNAs at wobble position. This Drosophila willistoni (Fruit fly) protein is Cytoplasmic tRNA 2-thiolation protein 2.